Reading from the N-terminus, the 116-residue chain is Vesicle-associated membrane protein 2 (116 aa).

Residues 1-33 form a disordered region; that stretch reads MSATAATAPPAAPAGEGGPPAPPPNLTSNRRLQ. At Ser2 the chain carries N-acetylserine. The Cytoplasmic portion of the chain corresponds to 2–94; it reads SATAATAPPA…KRKYWWKNLK (93 aa). Residues 31–91 form the v-SNARE coiled-coil homology domain; it reads RLQQTQAQVD…AKLKRKYWWK (61 aa). Residues 92 to 116 form a required for interaction with SEPT8 region; sequence NLKMMIILGVICAIILIIIIVYFSS. The helical; Anchor for type IV membrane protein transmembrane segment at 95–114 threads the bilayer; sequence MMIILGVICAIILIIIIVYF. Residues 115-116 are Vesicular-facing; the sequence is SS.

It belongs to the synaptobrevin family. Part of the SNARE core complex containing SNAP25, VAMP2 and STX1A; this complex constitutes the basic catalytic machinery of the complex neurotransmitter release apparatus. Recruited to the SNARE complex following binding of the SNARE complex component STX1A to STXBP1. This complex binds to CPLX1. Interacts with POPDC1 and STX4. Interacts with VAPA and VAPB. Interacts with WDFY2, PRKCZ and PRKCI. Forms a complex with WDFY2 and PRKCZ. Interacts (via N-terminus) with KCNB1 (via N-terminus and C-terminus); stimulates the channel inactivation rate of KCNB1. Interacts with SEPT8; the interaction inhibits interaction of VAMP2 with SYP. Interacts with SYP; the interaction is inhibited by interaction with SEPT8. Interacts with PICALM. Interacts with alpha-synuclein/SNCA. Interacts with STX3. In terms of processing, phosphorylated by PRKCZ in vitro and this phosphorylation is increased in the presence of WDFY2.

Its subcellular location is the cytoplasmic vesicle. The protein resides in the secretory vesicle. The protein localises to the synaptic vesicle membrane. It is found in the cell membrane. Functionally, involved in the targeting and/or fusion of transport vesicles to their target membrane. Major SNARE protein of synaptic vesicles which mediates fusion of synaptic vesicles to release neurotransmitters. Essential for fast vesicular exocytosis and activity-dependent neurotransmitter release as well as fast endocytosis that mediates rapid reuse of synaptic vesicles. Modulates the gating characteristics of the delayed rectifier voltage-dependent potassium channel KCNB1. The chain is Vesicle-associated membrane protein 2 (VAMP2) from Bos taurus (Bovine).